We begin with the raw amino-acid sequence, 259 residues long: Insulin-like growth factor-binding protein 1 (259 aa).

Residues 1–25 form the signal peptide; that stretch reads MSEVPVARVWLVLLLLTVQVGVTAG. The 82-residue stretch at 26–107 folds into the IGFBP N-terminal domain; the sequence is APWQCAPCSA…TRGQGACVQE (82 aa). 6 disulfide bridges follow: cysteine 30-cysteine 57, cysteine 33-cysteine 59, cysteine 41-cysteine 60, cysteine 48-cysteine 63, cysteine 71-cysteine 84, and cysteine 78-cysteine 104. A Phosphoserine; by FAM20C modification is found at serine 45. A phosphoserine mark is found at serine 120, serine 123, serine 126, and serine 144. Serine 156 is subject to Phosphoserine; by FAM20C. At threonine 157 the chain carries Phosphothreonine; by FAM20C. Phosphotyrosine is present on tyrosine 158. The Thyroglobulin type-1 domain maps to 173–251; sequence KEPCRIELYR…SPEIRGDPNC (79 aa). 3 disulfide bridges follow: cysteine 176–cysteine 206, cysteine 217–cysteine 228, and cysteine 230–cysteine 251. Threonine 193 carries the post-translational modification Phosphothreonine; by FAM20C. Serine 194 and serine 199 each carry phosphoserine; by FAM20C. A Phosphoserine; by FAM20C modification is found at serine 242. Residues 246–248 carry the Cell attachment site motif; it reads RGD.

As to quaternary structure, binds equally well IGF1 and IGF2. Interacts with integrin ITGA5:ITGB1. Interacts with VHL; this interaction inhibits HIF1A degradation. Post-translationally, phosphorylated; probably by casein kinase II. Phosphorylation alters the affinity of the protein for IGFs. In amniotic fluid, the unmodified protein is the most abundant form, while mono-, bi-, tri- and tetraphosphorylated forms are present in decreasing amounts. The phosphorylation state may influence the propensity to proteolysis.

It localises to the secreted. Functionally, multifunctional protein that plays a critical role in regulating the availability of IGFs such as IGF1 and IGF2 to their receptors and thereby regulates IGF-mediated cellular processes including cell migration, proliferation, differentiation or apoptosis in a cell-type specific manner. Also plays a positive role in cell migration by interacting with integrin ITGA5:ITGB1 through its RGD motif. Mechanistically, binding to integrins leads to activation of focal adhesion kinase/PTK2 and stimulation of the mitogen-activated protein kinase (MAPK) pathway. Regulates cardiomyocyte apoptosis by suppressing HIF-1alpha/HIF1A ubiquitination and subsequent degradation. The polypeptide is Insulin-like growth factor-binding protein 1 (IGFBP1) (Homo sapiens (Human)).